The primary structure comprises 574 residues: MEVPPQKSAPGSALSTARVLGGIQRPRHLSGFGFGSDGLLGSPERAASSSPVTTLTQTMYNLAGLGSETPKTQVGSLSFQNRLTDLSLSRRTSECSLSSESSESSDAGLCMDSPSPMDPQTAERTFEQAIQAASRVIQKMQFTIKASVFASEAAGHSPVLQNITNSQALDSWEKDEAGYRAASSPGEDKENDGYIFKMPQKLPHSSSARALAEWASRREAFTQRPSSAPDLMCLTTDGKMDVEEASPVAQSSSLTPVERACEEDDGFVDILESDLKDDDMVPAGMENLISAPLVKKLDKEEEQDLIMFSKCQRLFRSPSMPCSVIRPILKRLERPHDRDVPVLSKRRKSGTPLEEQQLEEPKARVFRSKSLCHEIESILDSDHRGLIGDYSKAFLLQTVDGKHQDLKYISPETMVALLTGKFSNIVEKFVIVDCRYPYEYEGGHIKNAVNLPLEPDAETFLLKHPITPCNLDKRIILIFHCEFSSERGPRMCRFIRERDRAANDYPSLYYPEMYILKGGYKEFFPQHPNFCEPQDYRPMNHAAFRDELRNFRLKTRSWAGERSTTQLCSRLQDQ.

Disordered regions lie at residues 31-51 (GFGF…SSSP) and 90-110 (RRTS…AGLC). Ser-42 carries the phosphoserine modification. Positions 90–105 (RRTSECSLSSESSESS) are enriched in low complexity. Residue Ser-166 is modified to Phosphoserine; by MELK. Ser-246 carries the post-translational modification Phosphoserine. Ser-319 carries the phosphoserine; by MAPKAPK2 and MELK modification. A Phosphoserine; by MELK and MAPK14 modification is found at Ser-319. Positions 339 to 359 (DVPVLSKRRKSGTPLEEQQLE) are disordered. Ser-349 carries the post-translational modification Phosphoserine; by AURKA. The residue at position 370 (Ser-370) is a Phosphoserine; by BRSK1 and MAPK14. In terms of domain architecture, Rhodanese spans 425–532 (IVEKFVIVDC…FFPQHPNFCE (108 aa)). The active site involves Cys-481. At Ser-557 the chain carries Phosphoserine.

The protein belongs to the MPI phosphatase family. As to quaternary structure, interacts with MAPK14 and 14-3-3 proteins. In terms of processing, phosphorylated by BRSK1 in vitro. Phosphorylated by CHEK1, which inhibits the activity of this protein. Phosphorylation at Ser-349 by AURKA might locally participate in the control of the onset of mitosis. Phosphorylation by MELK at Ser-166 promotes localization to the centrosome and the spindle poles during mitosis. Phosphorylation at Ser-319 and Ser-370 by MAPK14 is required for binding to 14-3-3 proteins.

The protein localises to the cytoplasm. It localises to the cytoskeleton. The protein resides in the microtubule organizing center. Its subcellular location is the centrosome. It is found in the spindle pole. It catalyses the reaction O-phospho-L-tyrosyl-[protein] + H2O = L-tyrosyl-[protein] + phosphate. Its activity is regulated as follows. Stimulated by B-type cyclins. Its function is as follows. Tyrosine protein phosphatase which functions as a dosage-dependent inducer of mitotic progression. Directly dephosphorylates CDK1 and stimulates its kinase activity. Required for G2/M phases of the cell cycle progression and abscission during cytokinesis in a ECT2-dependent manner. The three isoforms seem to have a different level of activity. The sequence is that of M-phase inducer phosphatase 2 (Cdc25b) from Rattus norvegicus (Rat).